A 320-amino-acid polypeptide reads, in one-letter code: Lactamase-like protein GME11357 (320 aa).

The Zn(2+) site is built by His-106, His-108, Asp-110, and His-111. Asp-110 serves as the catalytic Proton donor/acceptor.

This sequence belongs to the metallo-beta-lactamase superfamily. Requires Zn(2+) as cofactor.

Its pathway is secondary metabolite biosynthesis. Its function is as follows. Lactamase-like protein; part of the gene cluster that mediates the biosynthesis of dibenzodioxocinones such as pestalotiollide B, a novel class of inhibitors against cholesterol ester transfer protein (CEPT). The biosynthesis initiates from condensation of acetate and malonate units catalyzed by the non-reducing PKS pks8/GME11356. Pks8/GME11356 lacks a thioesterase (TE) domain, which is important to the cyclizing of the third ring of atrochrysone carboxylic acid, and the esterase GME11355 might play the role of TE and catalyzes the cyclization reaction of the C ring. The lactamase-like protein GME11357 (or other beta-lactamases in Pestalotiopsis microspora) probably hydrolyzes the thioester bond between the ACP of pks8/GME11356 and the intermediate to release atrochrysone carboxylic acid, which is spontaneously dehydrates to form endocrocin anthrone. Endocrocin anthrone is further converted to emodin via the endocrocin intermediate. Emodin is then oxidized by several enzymes such as the Baeyer-Villiger oxidase GME11358, the oxidoreductase GME11367, the short chain dehydrogenase/reductase GME11373, as well as by other oxidoreductases from the cluster, to modify the A and C rings and open the B ring, and finally yield monodictyphenone. The prenyltransferase GME11375 may catalyze the addition reaction between the C5 side chains and the carbon bone of dibenzodioxocinones. The remaining biochemical reactions to the final product dibenzodioxocinones should be methylation catalyzed by methyltransferase GME11366 and reduction and lactonization reaction catalyzed by a series of oxidordeuctases. The protein is Lactamase-like protein GME11357 of Pestalotiopsis microspora.